The sequence spans 605 residues: Elongation factor 4 (605 aa).

The tr-type G domain maps to 4–186; that stretch reads SSVRNFCIIA…AIVNKVPAPK (183 aa). GTP contacts are provided by residues 16–21 and 133–136; these read DHGKST and NKID.

It belongs to the TRAFAC class translation factor GTPase superfamily. Classic translation factor GTPase family. LepA subfamily.

The protein resides in the cell membrane. It carries out the reaction GTP + H2O = GDP + phosphate + H(+). Functionally, required for accurate and efficient protein synthesis under certain stress conditions. May act as a fidelity factor of the translation reaction, by catalyzing a one-codon backward translocation of tRNAs on improperly translocated ribosomes. Back-translocation proceeds from a post-translocation (POST) complex to a pre-translocation (PRE) complex, thus giving elongation factor G a second chance to translocate the tRNAs correctly. Binds to ribosomes in a GTP-dependent manner. The sequence is that of Elongation factor 4 from Dehalococcoides mccartyi (strain ATCC BAA-2100 / JCM 16839 / KCTC 5957 / BAV1).